A 202-amino-acid chain; its full sequence is Imidazoleglycerol-phosphate dehydratase (202 aa).

This sequence belongs to the imidazoleglycerol-phosphate dehydratase family.

The protein localises to the cytoplasm. The catalysed reaction is D-erythro-1-(imidazol-4-yl)glycerol 3-phosphate = 3-(imidazol-4-yl)-2-oxopropyl phosphate + H2O. It functions in the pathway amino-acid biosynthesis; L-histidine biosynthesis; L-histidine from 5-phospho-alpha-D-ribose 1-diphosphate: step 6/9. This Sinorhizobium fredii (strain NBRC 101917 / NGR234) protein is Imidazoleglycerol-phosphate dehydratase.